Consider the following 167-residue polypeptide: MEETYTDSLDPEKLLQCPYDKNHQIRACRFPYHLIKCRKNHPDVASKLATCPFNARHQVPRAEISHHISSCDDRSCIEQDVVNQTRSLRQETLAESTWQCPPCDEDWDKDLWEQTSTPFVWGTTHYSDNNSPASNIVTEHKNNLASGMRVPKSLPYVLPWKNNGNAQ.

Ser8 carries the phosphoserine modification. 2 consecutive CHHC U11-48K-type zinc fingers follow at residues 14–41 and 48–75; these read LLQC…RKNH and LATC…DDRS. 8 residues coordinate Zn(2+): Cys17, His23, His33, Cys37, Cys51, His57, His67, and Cys71.

Belongs to the UPF0224 (FAM112) family.

It localises to the cytoplasm. In terms of biological role, required for spermatogenesis and is involved in the suppression of retrotransposon transcription in male germ cells. In Homo sapiens (Human), this protein is Gametocyte-specific factor 1 (GTSF1).